Reading from the N-terminus, the 264-residue chain is U1 snRNP-associated protein usp106 (264 aa).

The stretch at 83 to 126 (DYLEDLERHVDDCNKRIDIAEARREKTKEEEERIDELMRDIIHT) forms a coiled coil. Residues 233 to 258 (EDREKSRDKKDGEKQRDNLASFEDKI) are compositionally biased toward basic and acidic residues. The interval 233–264 (EDREKSRDKKDGEKQRDNLASFEDKISTSFVA) is disordered.

Belongs to the Luc7 family. Component of the U1 snRNP particle, a subcomplex of the spliceosome.

The protein resides in the cytoplasm. It localises to the nucleus. Functionally, component of the U1 snRNP particle, which recognizes and binds the 5'-splice site of pre-mRNA. Together with other non-snRNP factors, U1 snRNP forms the spliceosomal commitment complex, that targets pre-mRNA to the splicing pathway. This is U1 snRNP-associated protein usp106 (usp106) from Schizosaccharomyces pombe (strain 972 / ATCC 24843) (Fission yeast).